The sequence spans 1545 residues: Tricalbin-3 (1545 aa).

A disordered region spans residues 1-89 (MTGIKAQVHP…SNPEGKKQSS (89 aa)). Over 1–206 (MTGIKAQVHP…AYILENFYND (206 aa)) the chain is Cytoplasmic. Residues 62-80 (TKTSNSVSDVSKGQKTADS) are compositionally biased toward polar residues. A phosphoserine mark is found at serine 67 and serine 112. Residues 207 to 227 (WYCNIATVLGTCFFSWLFAYI) traverse the membrane as a helical segment. Glycine 228 is a topological domain (extracellular). A helical membrane pass occupies residues 229-249 (FSWWSMIFIFLGTATVYNAEY). The Cytoplasmic portion of the chain corresponds to 250–1545 (TRFNRNIRDD…VPEVPQEYTQ (1296 aa)). Residues 272–479 (RVESTTWLNS…PPNHLDINVE (208 aa)) enclose the SMP-LTD domain. The region spanning 470-596 (PPNHLDINVE…LQNPVLDNQT (127 aa)) is the C2 1 domain. Residues 620-660 (EDKSEEKAVERAEAKAKGKKEDENEDTTEKEEDENEESSQT) adopt a coiled-coil conformation. A compositionally biased stretch (basic and acidic residues) spans 624-641 (EEKAVERAEAKAKGKKED). A disordered region spans residues 624–660 (EEKAVERAEAKAKGKKEDENEDTTEKEEDENEESSQT). Acidic residues predominate over residues 642–658 (ENEDTTEKEEDENEESS). 2 consecutive C2 domains span residues 646–763 (TTEK…AQEF) and 783–897 (MTGA…SGKY). The stretch at 937 to 972 (SPEELVNVEKLEKELKEKKKKFEATQEENEQEMEKN) forms a coiled coil. A C2 4 domain is found at 1119–1234 (PTSVKLPSSE…EVGKTYNWNL (116 aa)). Residues aspartate 1150, aspartate 1156, aspartate 1204, aspartate 1206, and aspartate 1212 each contribute to the Ca(2+) site. The segment at 1304–1404 (LLKSLGGNPM…NSRGHSRASS (101 aa)) is disordered. The segment covering 1318 to 1328 (SSNGNESNGAK) has biased composition (polar residues). A compositionally biased stretch (basic and acidic residues) spans 1329 to 1340 (KSSEKKSFDRRS). Phosphoserine occurs at positions 1340, 1342, and 1346. Residues 1341–1351 (PSNLNSTSVTP) are compositionally biased toward polar residues. Threonine 1350 carries the phosphothreonine modification. Serine 1354 bears the Phosphoserine mark. The segment covering 1361–1373 (VPNTSYAPVQSAS) has biased composition (polar residues). A compositionally biased stretch (low complexity) spans 1377-1404 (KPTDNTSSSSNKKDTPSSNSRGHSRASS). One can recognise a C2 5 domain in the interval 1396-1514 (SRGHSRASSF…QQDGQISVKL (119 aa)). Serine 1400 is subject to Phosphoserine.

The protein belongs to the tricalbin family. As to quaternary structure, interacts with TCB2 via its C-terminal domain. It depends on Ca(2+) as a cofactor.

It is found in the cell membrane. Its subcellular location is the endoplasmic reticulum membrane. May play a role in membrane trafficking. This is Tricalbin-3 (TCB3) from Saccharomyces cerevisiae (strain ATCC 204508 / S288c) (Baker's yeast).